Reading from the N-terminus, the 155-residue chain is Ribosomal RNA large subunit methyltransferase H (155 aa).

S-adenosyl-L-methionine contacts are provided by residues L72, G103, and 122–127 (LSALTL).

The protein belongs to the RNA methyltransferase RlmH family. Homodimer.

It is found in the cytoplasm. The catalysed reaction is pseudouridine(1915) in 23S rRNA + S-adenosyl-L-methionine = N(3)-methylpseudouridine(1915) in 23S rRNA + S-adenosyl-L-homocysteine + H(+). Its function is as follows. Specifically methylates the pseudouridine at position 1915 (m3Psi1915) in 23S rRNA. This chain is Ribosomal RNA large subunit methyltransferase H, found in Cronobacter sakazakii (strain ATCC BAA-894) (Enterobacter sakazakii).